A 327-amino-acid polypeptide reads, in one-letter code: Nocardicin C-9' epimerase (327 aa).

K43 is modified (N6-(pyridoxal phosphate)lysine).

The protein belongs to the ACC deaminase/D-cysteine desulfhydrase family. The cofactor is pyridoxal 5'-phosphate.

The enzyme catalyses isonocardicin C = nocardicin C. The catalysed reaction is isonocardicin A = nocardicin A. The protein operates within antibiotic biosynthesis. In terms of biological role, involved in the biosynthesis of the beta-lactam antibiotic nocardicin A. Catalyzes the interconversion of the nocardicin homoseryl side chain in both nocardicin A with isonocardicin A, and nocardicin C with isonocardicin C. This is Nocardicin C-9' epimerase from Nocardia uniformis subsp. tsuyamanensis.